Reading from the N-terminus, the 408-residue chain is Solute carrier family 35 member F1 (408 aa).

The tract at residues 1 to 20 (MIPPEPPQPQLQPPPPPAPP) is disordered. The next 10 helical transmembrane spans lie at 60–80 (MLISVALGQVLSLLVCGIGLT), 94–114 (VFQSFLNYILLFLVYTTTLAV), 129–147 (WWKYMILGLIDLEANYLVV), 159–179 (QLLDCFVIPVVILLSWFFLLI), 186–206 (FIGIVVCILGMGCMVGADVLV), 221–241 (LLVLGGATLYGISNVWEESII), 247–267 (VEFLGMIGLFGAFFSGIQLAI), 284–304 (LLYVGFSACMFGLYSFMPVVI), 311–331 (SVNLSLLTADLYSLFCGLFLF), and 335–355 (FSGLYLLSFFTILIGLVLYSS).

It belongs to the SLC35F solute transporter family.

The protein localises to the cytoplasmic vesicle. The protein resides in the secretory vesicle. It localises to the synaptic vesicle membrane. In terms of biological role, putative solute transporter. This Mus musculus (Mouse) protein is Solute carrier family 35 member F1 (Slc35f1).